Consider the following 436-residue polypeptide: Prenyltransferase nscD (436 aa).

It belongs to the tryptophan dimethylallyltransferase family.

Its pathway is secondary metabolite biosynthesis. In terms of biological role, prenyltransferase; part of the gene cluster that mediates the biosynthesis of neosartoricin B, a prenylated anthracenone that probably exhibits T-cell antiproliferative activity, suggestive of a physiological role as an immunosuppressive agent. The non-reducing polyketide synthase nscA probably synthesizes and cyclizes the decaketide backbone. The hydrolase nscB then mediates the product release through hydrolysis followed by spontaneous decarboxylation. The prenyltransferase nscD catalyzes the addition of the dimethylallyl group to the aromatic C5. The FAD-dependent monooxygenase nscC is then responsible for the stereospecific hydroxylation at C2. Neosartoricin B can be converted into two additional compounds neosartoricins C and D. Neosartoricin C is a spirocyclic compound that is cyclized through the attack of C3 hydroxyl on C14, followed by dehydration. On the other hand, neosartoricin D is a further cyclized compound in which attack of C2 on C14 in neosartoricin C results in the formation of the acetal-containing dioxabicyclo-octanone ring. Both of these compounds are novel and possibly represent related metabolites of the gene cluster. This chain is Prenyltransferase nscD, found in Trichophyton equinum (strain ATCC MYA-4606 / CBS 127.97) (Horse ringworm fungus).